The chain runs to 168 residues: NADH dehydrogenase [ubiquinone] 1 alpha subcomplex assembly factor 2 (168 aa).

A compositionally biased stretch (basic and acidic residues) spans 108–118 (KEKLLQEESNK). The disordered stretch occupies residues 108-168 (KEKLLQEESN…MPHGDKGHSQ (61 aa)). A Phosphoserine modification is found at S133. The segment covering 144–155 (ESPTSTGKTFQP) has biased composition (polar residues).

Belongs to the complex I NDUFA12 subunit family. As to quaternary structure, interacts with ARMC9.

The protein localises to the mitochondrion. Its function is as follows. Acts as a molecular chaperone for mitochondrial complex I assembly. Complex I functions in the transfer of electrons from NADH to the respiratory chain. The immediate electron acceptor for the enzyme is believed to be ubiquinone. Is involved in the initial steps of cilia formation, including removal of CP110 from the mother centrioles, docking of membrane vesicles to the mother centrioles, and establishment of the transition zone. The polypeptide is NADH dehydrogenase [ubiquinone] 1 alpha subcomplex assembly factor 2 (NDUFAF2) (Bos taurus (Bovine)).